The primary structure comprises 407 residues: Phosphopentomutase (407 aa).

Positions 10, 306, 311, 347, 348, and 359 each coordinate Mn(2+).

The protein belongs to the phosphopentomutase family. Requires Mn(2+) as cofactor.

It is found in the cytoplasm. It catalyses the reaction 2-deoxy-alpha-D-ribose 1-phosphate = 2-deoxy-D-ribose 5-phosphate. The enzyme catalyses alpha-D-ribose 1-phosphate = D-ribose 5-phosphate. The protein operates within carbohydrate degradation; 2-deoxy-D-ribose 1-phosphate degradation; D-glyceraldehyde 3-phosphate and acetaldehyde from 2-deoxy-alpha-D-ribose 1-phosphate: step 1/2. In terms of biological role, isomerase that catalyzes the conversion of deoxy-ribose 1-phosphate (dRib-1-P) and ribose 1-phosphate (Rib-1-P) to deoxy-ribose 5-phosphate (dRib-5-P) and ribose 5-phosphate (Rib-5-P), respectively. The chain is Phosphopentomutase from Salmonella paratyphi C (strain RKS4594).